A 234-amino-acid polypeptide reads, in one-letter code: Nuclear transcription factor Y subunit B-6 (234 aa).

2 disordered regions span residues 1–21 (MERGGFHGYRKLSVNNTTPSP) and 35–55 (MRPPEFNQPNKTSNGGEEECT). Residues 63 to 69 (MPIANVI) mediate DNA binding. Residues 90–101 (IQECVSEYISFI) form a subunit association domain (SAD) region. The segment at 206 to 234 (NEPNSKMSGSSSGASGARVEVFPTQQHKY) is disordered. Positions 213 to 222 (SGSSSGASGA) are enriched in low complexity.

The protein belongs to the NFYB/HAP3 subunit family. Heterotrimeric transcription factor composed of three components, NF-YA, NF-YB and NF-YC. NF-YB and NF-YC must interact and dimerize for NF-YA association and DNA binding. Interacts with PRN1. Binds directly with DPB3-1. As to expression, expressed in roots, flowers and developing siliques. Present in etiolated seedlings.

It is found in the nucleus. Functionally, component of the NF-Y/HAP transcription factor complex. The NF-Y complex stimulates the transcription of various genes by recognizing and binding to a CCAAT motif in promoters. Plays a role in the regulation of the embryogenesis. Involved in the abscisic acid (ABA) signaling pathway. The protein is Nuclear transcription factor Y subunit B-6 of Arabidopsis thaliana (Mouse-ear cress).